A 122-amino-acid chain; its full sequence is Small ribosomal subunit protein uS13 (122 aa).

The disordered stretch occupies residues 95-122 (NLPVRGQRTHTNARTRKGKAKPIAGKKK).

This sequence belongs to the universal ribosomal protein uS13 family. Part of the 30S ribosomal subunit. Forms a loose heterodimer with protein S19. Forms two bridges to the 50S subunit in the 70S ribosome.

Its function is as follows. Located at the top of the head of the 30S subunit, it contacts several helices of the 16S rRNA. In the 70S ribosome it contacts the 23S rRNA (bridge B1a) and protein L5 of the 50S subunit (bridge B1b), connecting the 2 subunits; these bridges are implicated in subunit movement. Contacts the tRNAs in the A and P-sites. The protein is Small ribosomal subunit protein uS13 of Methylobacterium nodulans (strain LMG 21967 / CNCM I-2342 / ORS 2060).